The primary structure comprises 135 residues: Class I hydrophobin 15 (135 aa).

The signal sequence occupies residues 1 to 21 (MFAKSATIAIVLAALAGFSAA). 4 disulfides stabilise this stretch: C50–C113, C57–C107, C58–C97, and C114–C127. The N-linked (GlcNAc...) asparagine glycan is linked to N131.

Belongs to the fungal hydrophobin family. Self-assembles to form functional amyloid fibrils called rodlets. Self-assembly into fibrillar rodlets occurs spontaneously at hydrophobic:hydrophilic interfaces and the rodlets further associate laterally to form amphipathic monolayers.

Its subcellular location is the secreted. It is found in the cell wall. Its function is as follows. Aerial growth, conidiation, and dispersal of filamentous fungi in the environment rely upon a capability of their secreting small amphipathic proteins called hydrophobins (HPBs) with low sequence identity. Class I can self-assemble into an outermost layer of rodlet bundles on aerial cell surfaces, conferring cellular hydrophobicity that supports fungal growth, development and dispersal; whereas Class II form highly ordered films at water-air interfaces through intermolecular interactions but contribute nothing to the rodlet structure. This Pleurotus ostreatus (strain PC15) (Oyster mushroom) protein is Class I hydrophobin 15.